The chain runs to 360 residues: Photosystem II protein D1 2 (360 aa).

3 consecutive transmembrane segments (helical) span residues tyrosine 29–threonine 46, histidine 118–leucine 133, and tryptophan 142–alanine 156. Histidine 118 is a chlorophyll a binding site. Tyrosine 126 is a binding site for pheophytin a. The [CaMn4O5] cluster site is built by aspartate 170 and glutamate 189. Residues phenylalanine 197–leucine 218 form a helical membrane-spanning segment. Chlorophyll a is bound at residue histidine 198. Residues histidine 215 and serine 264–phenylalanine 265 contribute to the a quinone site. Histidine 215 lines the Fe cation pocket. Histidine 272 lines the Fe cation pocket. A helical membrane pass occupies residues phenylalanine 274 to leucine 288. Residues histidine 332, glutamate 333, aspartate 342, and alanine 344 each contribute to the [CaMn4O5] cluster site. The propeptide occupies alanine 345–glycine 360.

Belongs to the reaction center PufL/M/PsbA/D family. As to quaternary structure, PSII is composed of 1 copy each of membrane proteins PsbA, PsbB, PsbC, PsbD, PsbE, PsbF, PsbH, PsbI, PsbJ, PsbK, PsbL, PsbM, PsbT, PsbX, PsbY, PsbZ, Psb30/Ycf12, peripheral proteins PsbO, CyanoQ (PsbQ), PsbU, PsbV and a large number of cofactors. It forms dimeric complexes. It depends on The D1/D2 heterodimer binds P680, chlorophylls that are the primary electron donor of PSII, and subsequent electron acceptors. It shares a non-heme iron and each subunit binds pheophytin, quinone, additional chlorophylls, carotenoids and lipids. D1 provides most of the ligands for the Mn4-Ca-O5 cluster of the oxygen-evolving complex (OEC). There is also a Cl(-1) ion associated with D1 and D2, which is required for oxygen evolution. The PSII complex binds additional chlorophylls, carotenoids and specific lipids. as a cofactor. In terms of processing, tyr-161 forms a radical intermediate that is referred to as redox-active TyrZ, YZ or Y-Z. Post-translationally, C-terminally processed by CtpA; processing is essential to allow assembly of the oxygen-evolving complex and thus photosynthetic growth.

The protein resides in the cellular thylakoid membrane. It catalyses the reaction 2 a plastoquinone + 4 hnu + 2 H2O = 2 a plastoquinol + O2. Functionally, photosystem II (PSII) is a light-driven water:plastoquinone oxidoreductase that uses light energy to abstract electrons from H(2)O, generating O(2) and a proton gradient subsequently used for ATP formation. It consists of a core antenna complex that captures photons, and an electron transfer chain that converts photonic excitation into a charge separation. The D1/D2 (PsbA/PsbD) reaction center heterodimer binds P680, the primary electron donor of PSII as well as several subsequent electron acceptors. In Picosynechococcus sp. (strain ATCC 27264 / PCC 7002 / PR-6) (Agmenellum quadruplicatum), this protein is Photosystem II protein D1 2.